The following is a 281-amino-acid chain: Pantothenate synthetase (281 aa).

30–37 contributes to the ATP binding site; it reads MGYLHEGH. His37 (proton donor) is an active-site residue. Gln60 contributes to the (R)-pantoate binding site. Gln60 contributes to the beta-alanine binding site. An ATP-binding site is contributed by 146-149; sequence GEKD. (R)-pantoate is bound at residue Gln152. ATP-binding positions include Ile175 and 183-186; that span reads KSSR.

This sequence belongs to the pantothenate synthetase family. As to quaternary structure, homodimer.

It is found in the cytoplasm. The enzyme catalyses (R)-pantoate + beta-alanine + ATP = (R)-pantothenate + AMP + diphosphate + H(+). The protein operates within cofactor biosynthesis; (R)-pantothenate biosynthesis; (R)-pantothenate from (R)-pantoate and beta-alanine: step 1/1. In terms of biological role, catalyzes the condensation of pantoate with beta-alanine in an ATP-dependent reaction via a pantoyl-adenylate intermediate. This is Pantothenate synthetase from Ruminiclostridium cellulolyticum (strain ATCC 35319 / DSM 5812 / JCM 6584 / H10) (Clostridium cellulolyticum).